The primary structure comprises 433 residues: Histidinol dehydrogenase (433 aa).

Positions 130, 191, and 214 each coordinate NAD(+). Positions 237, 259, and 262 each coordinate substrate. Zn(2+) contacts are provided by Gln259 and His262. Active-site proton acceptor residues include Glu327 and His328. His328, Asp361, Glu415, and His420 together coordinate substrate. Asp361 contacts Zn(2+). His420 lines the Zn(2+) pocket.

The protein belongs to the histidinol dehydrogenase family. Requires Zn(2+) as cofactor.

The catalysed reaction is L-histidinol + 2 NAD(+) + H2O = L-histidine + 2 NADH + 3 H(+). It participates in amino-acid biosynthesis; L-histidine biosynthesis; L-histidine from 5-phospho-alpha-D-ribose 1-diphosphate: step 9/9. In terms of biological role, catalyzes the sequential NAD-dependent oxidations of L-histidinol to L-histidinaldehyde and then to L-histidine. In Ruegeria pomeroyi (strain ATCC 700808 / DSM 15171 / DSS-3) (Silicibacter pomeroyi), this protein is Histidinol dehydrogenase.